We begin with the raw amino-acid sequence, 1196 residues long: Protein BRASSINOSTEROID INSENSITIVE 1 (1196 aa).

An N-terminal signal peptide occupies residues 1-23; that stretch reads MKTFSSFFLSVTTLFFFSFFSLS. The short motif at 62 to 69 is the Cys pair 1 element; that stretch reads CTFDGVTC. LRR repeat units lie at residues 71 to 98, 99 to 121, 122 to 146, 148 to 169, 172 to 197, 199 to 221, 222 to 244, 245 to 268, 269 to 290, 291 to 314, 316 to 338, 339 to 363, 364 to 388, 390 to 413, 415 to 439, 441 to 463, 464 to 487, 488 to 511, 513 to 535, 536 to 559, and 561 to 583; these read DDKV…LLSL, TGLE…FKCS, ASLT…SLGS, SGLK…VSGG, LNSL…VLSD, CGEL…VSRC, VNLE…LGDC, SALQ…ISTC, TELK…PLPL, KSLQ…LSGA, DTLT…FFGS, CSLL…TLLK, MRGL…LTNL, ASLL…LCQN, KNTL…LSNC, ELVS…LGSL, SKLR…LMYV, KTLE…LSNC, NLNW…IGRL, ENLA…LGDC, and SLIW…MFKQ. N-linked (GlcNAc...) asparagine glycosylation is present at Asn112. Asn154 is a glycosylation site (N-linked (GlcNAc...) asparagine). An N-linked (GlcNAc...) asparagine glycan is attached at Asn233. Residue Asn275 is glycosylated (N-linked (GlcNAc...) asparagine). Residues Asn351, Asn387, Asn401, and Asn438 are each glycosylated (N-linked (GlcNAc...) asparagine). Asn510 carries an N-linked (GlcNAc...) asparagine glycan. N-linked (GlcNAc...) asparagine glycans are attached at residues Asn545 and Asn573. Residue Tyr597 participates in brassinolide binding. A glycan (N-linked (GlcNAc...) asparagine) is linked at Asn636. Positions 640–642 are SERK1 binding; that stretch reads RVY. The brassinolide site is built by Tyr642 and Ser647. Asn653 is a glycosylation site (N-linked (GlcNAc...) asparagine). 4 LRR repeats span residues 653–677, 678–701, 702–725, and 727–750; these read NGSM…IGSM, PYLF…VGDL, RGLN…MSAL, and MLTE…QFET. Asn705 provides a ligand contact to brassinolide. Residues 726–729 form an SERK1 binding region; the sequence is TMLT. N-linked (GlcNAc...) asparagine glycosylation is present at Asn737. The SERK1 binding stretch occupies residues 746 to 750; that stretch reads GQFET. A Cys pair 2 motif is present at residues 763-770; that stretch reads CGYPLPRC. A helical transmembrane segment spans residues 793 to 813; sequence AGSVAMGLLFSFVCIFGLILV. Residue Tyr831 is modified to Phosphotyrosine. Phosphoserine is present on Ser838. Phosphothreonine occurs at positions 842, 846, and 851. The residue at position 858 (Ser858) is a Phosphoserine. 2 positions are modified to phosphothreonine: Thr872 and Thr880. In terms of domain architecture, Protein kinase spans 883-1158; the sequence is FHNDSLIGSG…VQVMAMFKEI (276 aa). Residues Ser887 and Ser891 each carry the phosphoserine modification. ATP contacts are provided by residues 889-897 and Lys911; that span reads IGSGGFGDV. Residue Tyr956 is modified to Phosphotyrosine. Residues 957–959 and 963–966 contribute to the ATP site; these read EFM and SLED. At Ser981 the chain carries Phosphoserine. Thr982 is subject to Phosphothreonine. Catalysis depends on Asp1009, which acts as the Proton acceptor. ATP-binding positions include 1009–1014 and Asp1027; that span reads DMKSSN. Ser1035 carries the post-translational modification Phosphoserine. Thr1039 bears the Phosphothreonine mark. Ser1042 and Ser1044 each carry phosphoserine. Thr1045 and Thr1049 each carry phosphothreonine. Phosphotyrosine is present on Tyr1052. Ser1060 is modified (phosphoserine). At Tyr1072 the chain carries Phosphotyrosine. Residues Ser1166 and Ser1168 each carry the phosphoserine modification. Position 1169 is a phosphothreonine (Thr1169). Phosphoserine is present on residues Ser1172 and Ser1179. The residue at position 1180 (Thr1180) is a Phosphothreonine. Position 1187 is a phosphoserine (Ser1187).

This sequence belongs to the protein kinase superfamily. Ser/Thr protein kinase family. In terms of assembly, monomer or homodimer in the plasma membrane. Heterodimer with BAK1 in the endosomes. Interacts with SERK1 and TTL in a kinase-dependent manner. Bind to SERK1 in a brassinolide-dependent manner. Component of the SERK1 signaling complex, composed of KAPP, CDC48A, GRF6 or GRF7, SERK1, SERK2, SERK3/BAK1 and BRI1. Interacts with CDG1. No interactions with PSKR1 or CNGC17. Interacts with BIK1. Interacts with B'ALPHA, B'BETA, B'GAMMA and B'ETA. Interacts with BSK1 and BSK3. Interacts with BSK5, BSK6 and BSK11. Autophosphorylated on Tyr-831, Tyr-956 and maybe Tyr-1072. Phosphorylated on at least 12 sites, with a preference for Ser residues. Transphosphorylated on Ser-887 by SERK1 and on Ser-838, Thr-846, Ser-858 and Ser-1166 by BAK1. Phosphorylation on Ser-1166 enhances the kinase activity. Post-translationally, glycosylated. In terms of tissue distribution, expressed ubiquitously.

It is found in the cell membrane. Its subcellular location is the endosome membrane. It carries out the reaction L-seryl-[protein] + ATP = O-phospho-L-seryl-[protein] + ADP + H(+). It catalyses the reaction L-threonyl-[protein] + ATP = O-phospho-L-threonyl-[protein] + ADP + H(+). The enzyme catalyses L-tyrosyl-[protein] + ATP = O-phospho-L-tyrosyl-[protein] + ADP + H(+). Activated by Ser and Thr phosphorylation. In terms of biological role, receptor with a dual specificity kinase activity acting on both serine/threonine- and tyrosine-containing substrates. Regulates, in response to brassinosteroid binding, a signaling cascade involved in plant development, including expression of light- and stress-regulated genes, promotion of cell elongation, normal leaf and chloroplast senescence, and flowering. Binds brassinolide (BL), and less effectively castasterone (CS), but not 2,3,22,23-O-tetramethylbrassinolide or ecdysone. May be involved in a feedback regulation of brassinosteroid biosynthesis. Phosphorylates BRI1-associated receptor kinase 1 (BAK1), Transthyretin-Like protein (TTL) and SERK1 on 'Ser-299' and 'Thr-462' in vitro. May have a guanylyl cyclase activity. Phosphorylates BSK1, BSK2 and BSK3 in vitro. Phosphorylates BSK1, BSK3, BSK5, BSK6, BSK8 and BSK11 in vitro. This Arabidopsis thaliana (Mouse-ear cress) protein is Protein BRASSINOSTEROID INSENSITIVE 1.